The sequence spans 358 residues: Myb family transcription factor IPN2 (358 aa).

Residues 1–20 form a disordered region; the sequence is MERMFPPKKPSTMNSHDRPM. Positions 32–92 constitute an HTH myb-type domain; it reads TDPKPRLRWT…HLQKFRLGKQ (61 aa). A DNA-binding region (H-T-H motif) is located at residues 63–88; sequence PKTIMRVMGVKGLTLYHLKSHLQKFR. Residues 127 to 171 adopt a coiled-coil conformation; it reads NMNEMQIEVQRRLHEQLEVQKHLQLRIEAQGKYMQSILEKAYQTL. Positions 139 to 144 match the LHEQLE motif; that stretch reads LHEQLE. Positions 310 to 358 are disordered; it reads IYDSKPEEKKFDASMKLERPSPRRAPLGERMSPMITTGTMAQGRSSPFG. Residues 311–330 are compositionally biased toward basic and acidic residues; sequence YDSKPEEKKFDASMKLERPS. Polar residues predominate over residues 343–358; it reads MITTGTMAQGRSSPFG.

The protein belongs to the MYB-CC family. In terms of assembly, interacts with NSP2. Expressed in leaves, stems, nodules and roots.

The protein resides in the nucleus. Transcriptional regulator required for Nod-factor-induced gene expression. Transcription activator involved in the induction of NIN and ENOD40 genes, which are required for rhizobial infection and early nodule development. Possesses strong transactivation activity in vitro. Does not seem to contribute to the early steps of the arbuscular mycorrhizal fungus infection and colonization processes in roots. This chain is Myb family transcription factor IPN2, found in Lotus japonicus (Lotus corniculatus var. japonicus).